The chain runs to 445 residues: 3-phosphoshikimate 1-carboxyvinyltransferase (445 aa).

Polar residues predominate over residues methionine 1–glycine 20. Residues methionine 1–proline 24 are disordered. Positions 28, 29, and 33 each coordinate 3-phosphoshikimate. Lysine 28 serves as a coordination point for phosphoenolpyruvate. Residues glycine 101 and arginine 129 each contribute to the phosphoenolpyruvate site. Residues serine 174, glutamine 176, aspartate 322, and lysine 349 each contribute to the 3-phosphoshikimate site. Residue glutamine 176 participates in phosphoenolpyruvate binding. The Proton acceptor role is filled by aspartate 322. Phosphoenolpyruvate is bound by residues arginine 353 and arginine 397.

The protein belongs to the EPSP synthase family. In terms of assembly, monomer.

The protein resides in the cytoplasm. It catalyses the reaction 3-phosphoshikimate + phosphoenolpyruvate = 5-O-(1-carboxyvinyl)-3-phosphoshikimate + phosphate. It participates in metabolic intermediate biosynthesis; chorismate biosynthesis; chorismate from D-erythrose 4-phosphate and phosphoenolpyruvate: step 6/7. In terms of biological role, catalyzes the transfer of the enolpyruvyl moiety of phosphoenolpyruvate (PEP) to the 5-hydroxyl of shikimate-3-phosphate (S3P) to produce enolpyruvyl shikimate-3-phosphate and inorganic phosphate. The polypeptide is 3-phosphoshikimate 1-carboxyvinyltransferase (Magnetococcus marinus (strain ATCC BAA-1437 / JCM 17883 / MC-1)).